Here is a 607-residue protein sequence, read N- to C-terminus: Protease Do-like 2, chloroplastic (607 aa).

The tract at residues 41–104 (SSNIKRKSSR…LSDFSRDQQT (64 aa)) is disordered. A compositionally biased stretch (basic and acidic residues) spans 87 to 104 (PKKEKKESLSDFSRDQQT). Positions 118–317 (VVKVYCTHTA…LTDYERNGKY (200 aa)) are serine protease. Active-site charge relay system residues include His-159, Asp-190, and Ser-268. The PDZ domain maps to 308–403 (LTDYERNGKY…YLISQKFAGD (96 aa)).

It belongs to the peptidase S1C family.

It is found in the plastid. The protein localises to the chloroplast thylakoid membrane. Functionally, serine protease that performs the primary cleavage of the photodamaged D1 protein in plant photosystem II. The chain is Protease Do-like 2, chloroplastic (DEGP2) from Arabidopsis thaliana (Mouse-ear cress).